Here is a 156-residue protein sequence, read N- to C-terminus: Small ribosomal subunit protein uS7 (156 aa).

The protein belongs to the universal ribosomal protein uS7 family. As to quaternary structure, part of the 30S ribosomal subunit. Contacts proteins S9 and S11.

In terms of biological role, one of the primary rRNA binding proteins, it binds directly to 16S rRNA where it nucleates assembly of the head domain of the 30S subunit. Is located at the subunit interface close to the decoding center, probably blocks exit of the E-site tRNA. In Citrobacter koseri (strain ATCC BAA-895 / CDC 4225-83 / SGSC4696), this protein is Small ribosomal subunit protein uS7.